Reading from the N-terminus, the 488-residue chain is Aspartyl/glutamyl-tRNA(Asn/Gln) amidotransferase subunit B (488 aa).

This sequence belongs to the GatB/GatE family. GatB subfamily. As to quaternary structure, heterotrimer of A, B and C subunits.

The enzyme catalyses L-glutamyl-tRNA(Gln) + L-glutamine + ATP + H2O = L-glutaminyl-tRNA(Gln) + L-glutamate + ADP + phosphate + H(+). It catalyses the reaction L-aspartyl-tRNA(Asn) + L-glutamine + ATP + H2O = L-asparaginyl-tRNA(Asn) + L-glutamate + ADP + phosphate + 2 H(+). Functionally, allows the formation of correctly charged Asn-tRNA(Asn) or Gln-tRNA(Gln) through the transamidation of misacylated Asp-tRNA(Asn) or Glu-tRNA(Gln) in organisms which lack either or both of asparaginyl-tRNA or glutaminyl-tRNA synthetases. The reaction takes place in the presence of glutamine and ATP through an activated phospho-Asp-tRNA(Asn) or phospho-Glu-tRNA(Gln). The polypeptide is Aspartyl/glutamyl-tRNA(Asn/Gln) amidotransferase subunit B (Chlamydia trachomatis serovar A (strain ATCC VR-571B / DSM 19440 / HAR-13)).